Here is a 296-residue protein sequence, read N- to C-terminus: AUGMIN subunit 2 (296 aa).

Coiled coils occupy residues 56–83 (DDLIRVLRELSVVQRKIADLQVELQGRK) and 253–285 (AVHKTRRQNNDQNEEEEEEEEEEDGNNNGNRRL). The tract at residues 218–296 (AVSLPTTPGG…WPPSVKKSSV (79 aa)) is disordered. Positions 264-277 (QNEEEEEEEEEEDG) are enriched in acidic residues.

Belongs to the HAUS2 family. Part of the augmin complex composed of 8 subunits. The complex acts on microtubules and interacts with gamma-tubulin in spindles and the phragmoplast.

Contributes to the assembly of the acentrosomal spindle and phragmoplast microtubule arrays as part of the augmin complex. The chain is AUGMIN subunit 2 from Arabidopsis thaliana (Mouse-ear cress).